The chain runs to 361 residues: DNA replication and repair protein RecF (361 aa).

30–37 (GPNGSGKT) is an ATP binding site.

This sequence belongs to the RecF family.

Its subcellular location is the cytoplasm. Its function is as follows. The RecF protein is involved in DNA metabolism; it is required for DNA replication and normal SOS inducibility. RecF binds preferentially to single-stranded, linear DNA. It also seems to bind ATP. The sequence is that of DNA replication and repair protein RecF from Yersinia enterocolitica serotype O:8 / biotype 1B (strain NCTC 13174 / 8081).